A 598-amino-acid polypeptide reads, in one-letter code: Nuclear receptor subfamily 4 group A member 2 (598 aa).

The segment at 1 to 22 is disordered; that stretch reads MPCVQAQYGSSPQGASPASQSY. Over residues 8 to 22 the composition is skewed to low complexity; the sequence is YGSSPQGASPASQSY. A DNA-binding region (nuclear receptor) is located at residues 260–335; that stretch reads EGLCAVCGDN…VGMVKEVVRT (76 aa). NR C4-type zinc fingers lie at residues 263–283 and 299–323; these read CAVC…CEGC and CLAN…FQKC. The Bipartite nuclear localization signal (NLS1) signature appears at 287 to 314; sequence FKRTVQKNAKYVCLANKNCPVDKRRRNR. The disordered stretch occupies residues 337–361; sequence SLKGRRGRLPSKPKSPQDPSPPSPP. The Nuclear localization signal (NLS1) signature appears at 338 to 350; sequence LKGRRGRLPSKPK. The span at 352–361 shows a compositional bias: pro residues; sequence PQDPSPPSPP. Positions 360-595 constitute an NR LBD domain; sequence PPVSLISALV…AIIDKLFLDT (236 aa). A nuclear export sequence (NES1) motif is present at residues 443-452; it reads FLELFVLRLA. The nuclear export sequence (NES2) motif lies at 568-577; that stretch reads QGLQRIFYLK.

The protein belongs to the nuclear hormone receptor family. NR4 subfamily. In terms of assembly, interacts with SFPQ, NCOR2, SIN3A and HADC1. The interaction with NCOR2 increases in the absence of PITX3. Interacts with PER2. Shows a ubiquitous distribution in the cerebral cortex, hippocampus, thalamus, amygdala, and midbrain. Expression increases in prenatally stressed adult offspring in the ventral tegmental area, whereas no changes are observed in the substantia nigra area (at protein level). Not expressed in quiescent liver but is rapidly induced following partial hepatectomy and is specific to hepatic growth as it is not induced in other mitogen-treated cells. Expressed at very low levels in the lung, spleen and stomach and at high levels in the brain.

It localises to the cytoplasm. Its subcellular location is the nucleus. Functionally, transcriptional regulator which is important for the differentiation and maintenance of meso-diencephalic dopaminergic (mdDA) neurons during development. It is crucial for expression of a set of genes such as SLC6A3, SLC18A2, TH and DRD2 which are essential for development of mdDA neurons. May confer liver-specific regulation of delayed-early genes induced later in the G1 phase of regeneration along with NR4A1. The protein is Nuclear receptor subfamily 4 group A member 2 (Nr4a2) of Rattus norvegicus (Rat).